The following is a 68-amino-acid chain: Conotoxin Cal12.1p1 (68 aa).

The propeptide occupies 1–23; it reads DLITNSYTRGKPRHVTSWRNLRT.

In terms of processing, contains 4 disulfide bonds. In terms of tissue distribution, expressed by the venom duct.

Its subcellular location is the secreted. In Californiconus californicus (California cone), this protein is Conotoxin Cal12.1p1.